The chain runs to 110 residues: uncharacterized protein (110 aa).

This is an uncharacterized protein from Saccharomyces cerevisiae (strain ATCC 204508 / S288c) (Baker's yeast).